A 198-amino-acid chain; its full sequence is Recombination protein RecR (198 aa).

A C4-type zinc finger spans residues 57–72 (CSVCGHITDKDPCYIC). One can recognise a Toprim domain in the interval 80–175 (SVICVVQESK…KVTRIAHGLP (96 aa)).

This sequence belongs to the RecR family.

Its function is as follows. May play a role in DNA repair. It seems to be involved in an RecBC-independent recombinational process of DNA repair. It may act with RecF and RecO. The protein is Recombination protein RecR of Listeria welshimeri serovar 6b (strain ATCC 35897 / DSM 20650 / CCUG 15529 / CIP 8149 / NCTC 11857 / SLCC 5334 / V8).